An 88-amino-acid polypeptide reads, in one-letter code: Putative membrane protein insertion efficiency factor (88 aa).

The protein belongs to the UPF0161 family.

The protein localises to the cell membrane. Functionally, could be involved in insertion of integral membrane proteins into the membrane. The polypeptide is Putative membrane protein insertion efficiency factor (Exiguobacterium sibiricum (strain DSM 17290 / CCUG 55495 / CIP 109462 / JCM 13490 / 255-15)).